The primary structure comprises 470 residues: Probable citrate synthase, mitochondrial (470 aa).

Catalysis depends on residues His-297, His-351, and Asp-406.

This sequence belongs to the citrate synthase family. In terms of assembly, homodimer.

It is found in the mitochondrion matrix. It catalyses the reaction oxaloacetate + acetyl-CoA + H2O = citrate + CoA + H(+). The protein operates within carbohydrate metabolism; tricarboxylic acid cycle; isocitrate from oxaloacetate: step 1/2. This is Probable citrate synthase, mitochondrial from Leishmania major.